Here is a 363-residue protein sequence, read N- to C-terminus: Methyltransferase pynC (363 aa).

Residues 199 to 200, Asp225, 254 to 255, Arg270, and Arg271 contribute to the S-adenosyl-L-methionine site; these read GG and SF.

This sequence belongs to the class I-like SAM-binding methyltransferase superfamily. Cation-independent O-methyltransferase family.

It functions in the pathway secondary metabolite biosynthesis. Functionally, methyltransferase; part of the gene cluster that mediates the biosynthesis of pyranonigrins, a family of antioxidative compounds. The first step of pyranonigrins biosynthesis is performed by the hybrid PKS-NRPS synthetase that condenses 6 malonyl-CoA units to an acetyl starter unit, to form a 1,3,5-trioxotetradecane-6,8-dienyl-ACP. The enoyl reductase (ER) domain of pynA is likely to be functional during the first two rounds of polyketide chain extension, to generate the saturated C-C bonds of the alkyl side chain. PynA subsequently forms the amide bond between the acyl chain and L-serine. Although pynA has a terminal reductase domain, it appears to require the thioesterase pynI for the release of the straight-chain intermediate from pynA via the formation of a tetramic acid pyranonigrin J. The methyltransferase pynC then coverts pyranonigrin J to pyranonigrin I via N-methylation. The FAD-dependent monooxygenase pynG catalyzes an epoxidation-mediated cyclization to form the dihydro-gamma-pyrone moiety, followed by pynD-catalyzed oxidation of the alcohol to the ketone and enolization to yield the characteristic tetramic acid-fused gamma-pyrone core of pyranonigrin H. Pyranonigrin H is substrate of pynH for dehydration-mediated exo-methylene formation from the serine side chain to produce pyranonigrin E, before the oxidase pynE reduces the exo-methylene of pyranonigrin E into a pendant methyl to form pyranonigrin G. The FAD-linked oxidoreductase pynB performs the reverse reaction and converts pyranonigrin G back to pyranonigrin E. The chain is Methyltransferase pynC from Aspergillus niger (strain ATCC MYA-4892 / CBS 513.88 / FGSC A1513).